The primary structure comprises 621 residues: Putative acyltransferase plsB1 (621 aa).

Positions 123-128 match the HXXXXD motif motif; that stretch reads HRSYLD.

This sequence belongs to the GPAT/DAPAT family.

The protein localises to the cell membrane. The chain is Putative acyltransferase plsB1 (plsB1) from Mycobacterium bovis (strain ATCC BAA-935 / AF2122/97).